The primary structure comprises 434 residues: Enolase (434 aa).

The substrate site is built by histidine 158 and glutamate 167. The Proton donor role is filled by glutamate 210. Residues aspartate 245, glutamate 294, and aspartate 319 each coordinate Mg(2+). Substrate is bound by residues glutamate 294 and aspartate 319. Catalysis depends on lysine 344, which acts as the Proton acceptor. Residues 371–374 and lysine 395 contribute to the substrate site; that span reads SHRS.

The protein belongs to the enolase family. As to quaternary structure, homodimer. Mg(2+) is required as a cofactor.

The protein localises to the cytoplasm. It carries out the reaction (2R)-2-phosphoglycerate = phosphoenolpyruvate + H2O. Its pathway is carbohydrate degradation; glycolysis; pyruvate from D-glyceraldehyde 3-phosphate: step 4/5. The polypeptide is Enolase (ENO) (Schistosoma mansoni (Blood fluke)).